The following is a 149-amino-acid chain: Urease accessory protein UreE (149 aa).

Belongs to the UreE family.

Its subcellular location is the cytoplasm. In terms of biological role, involved in urease metallocenter assembly. Binds nickel. Probably functions as a nickel donor during metallocenter assembly. The polypeptide is Urease accessory protein UreE (Prochlorococcus marinus (strain AS9601)).